Reading from the N-terminus, the 358-residue chain is Photosystem II protein D1 (358 aa).

3 consecutive transmembrane segments (helical) span residues 29–46 (YVGW…AATI), 116–131 (HFLI…QWEL), and 140–154 (WICV…AATS). Position 116 (H116) interacts with chlorophyll a. Pheophytin a is bound at residue W124. 2 residues coordinate [CaMn4O5] cluster: D168 and E187. Residues 195–216 (FHQLGVAGVFGGSLFCAMHGSL) form a helical membrane-spanning segment. H196 contributes to the chlorophyll a binding site. Residues H213 and 262 to 263 (SF) each bind a quinone. H213 serves as a coordination point for Fe cation. H270 is a binding site for Fe cation. Residues 272–286 (FLAAWPVVCIWFTAL) traverse the membrane as a helical segment. Positions 330, 331, 340, and 342 each coordinate [CaMn4O5] cluster. A propeptide spanning residues 343–358 (AGEVLPIALQSPAING) is cleaved from the precursor.

This sequence belongs to the reaction center PufL/M/PsbA/D family. As to quaternary structure, PSII is composed of 1 copy each of membrane proteins PsbA, PsbB, PsbC, PsbD, PsbE, PsbF, PsbH, PsbI, PsbJ, PsbK, PsbL, PsbM, PsbT, PsbX, PsbY, PsbZ, Psb30/Ycf12, peripheral proteins PsbO, CyanoQ (PsbQ), PsbU, PsbV and a large number of cofactors. It forms dimeric complexes. The cofactor is The D1/D2 heterodimer binds P680, chlorophylls that are the primary electron donor of PSII, and subsequent electron acceptors. It shares a non-heme iron and each subunit binds pheophytin, quinone, additional chlorophylls, carotenoids and lipids. D1 provides most of the ligands for the Mn4-Ca-O5 cluster of the oxygen-evolving complex (OEC). There is also a Cl(-1) ion associated with D1 and D2, which is required for oxygen evolution. The PSII complex binds additional chlorophylls, carotenoids and specific lipids.. In terms of processing, tyr-159 forms a radical intermediate that is referred to as redox-active TyrZ, YZ or Y-Z. C-terminally processed by CtpA; processing is essential to allow assembly of the oxygen-evolving complex and thus photosynthetic growth.

Its subcellular location is the cellular thylakoid membrane. It carries out the reaction 2 a plastoquinone + 4 hnu + 2 H2O = 2 a plastoquinol + O2. Functionally, photosystem II (PSII) is a light-driven water:plastoquinone oxidoreductase that uses light energy to abstract electrons from H(2)O, generating O(2) and a proton gradient subsequently used for ATP formation. It consists of a core antenna complex that captures photons, and an electron transfer chain that converts photonic excitation into a charge separation. The D1/D2 (PsbA/PsbD) reaction center heterodimer binds P680, the primary electron donor of PSII as well as several subsequent electron acceptors. The chain is Photosystem II protein D1 from Mastigocladus laminosus (Fischerella sp.).